The chain runs to 446 residues: N-succinylarginine dihydrolase (446 aa).

Substrate is bound by residues 19 to 28 (AGLSFGNVAS), Asn110, and 137 to 138 (HR). Glu174 is a catalytic residue. Arg213 is a substrate binding site. The active site involves His249. Substrate contacts are provided by Asp251 and Asn364. The active-site Nucleophile is Cys370.

It belongs to the succinylarginine dihydrolase family. As to quaternary structure, homodimer.

The catalysed reaction is N(2)-succinyl-L-arginine + 2 H2O + 2 H(+) = N(2)-succinyl-L-ornithine + 2 NH4(+) + CO2. Its pathway is amino-acid degradation; L-arginine degradation via AST pathway; L-glutamate and succinate from L-arginine: step 2/5. Its function is as follows. Catalyzes the hydrolysis of N(2)-succinylarginine into N(2)-succinylornithine, ammonia and CO(2). The polypeptide is N-succinylarginine dihydrolase (Burkholderia mallei (strain NCTC 10247)).